The following is a 493-amino-acid chain: Glycylpeptide N-tetradecanoyltransferase (493 aa).

The tract at residues 1–30 (MSDSKDSKGKAPQKPNDAEQTPGGKLTPQA) is disordered. Residues 82 to 85 (FKFW), 216 to 218 (LCI), and 224 to 228 (SKRLA) contribute to the tetradecanoyl-CoA site. Leu-493 acts as the Proton acceptor; via carboxylate in catalysis.

This sequence belongs to the NMT family. In terms of assembly, monomer.

It is found in the cytoplasm. It carries out the reaction N-terminal glycyl-[protein] + tetradecanoyl-CoA = N-tetradecanoylglycyl-[protein] + CoA + H(+). Functionally, adds a myristoyl group to the N-terminal glycine residue of certain cellular proteins. The polypeptide is Glycylpeptide N-tetradecanoyltransferase (swoF) (Emericella nidulans (strain FGSC A4 / ATCC 38163 / CBS 112.46 / NRRL 194 / M139) (Aspergillus nidulans)).